Reading from the N-terminus, the 565-residue chain is MKSPAPSRPQKMALIPACIFLCFAALSVQAEETSVTPQPPDILLGPLFNDVQNAKLFPDQKTFADAVPNSDPLMILADYRMQQNQSGFDLRHFVNVNFTLPKEGEKYVPPEGQSLREHIDGLWPVLTRSTENTEKWDSLLPLPKPYVVPGGRFREVYYWDSYFTMLGLAESGHWDKVADMVANFAHEIDTYGHIPNGNRSYYLSRSQPPFFALMVELLAQHEGDAALKQYLPQMQKEYAYWMDGVENLQAGQQEKRVVKLQDGTLLNRYWDDRDTPRPESWVEDIATAKSNPNRPATEIYRDLRSAAASGWDFSSRWMDNPQQLNTLRTTSIVPVDLNSLMFKMEKILARASKAAGDNAMANQYETLANARQKGIEKYLWNDQQGWYADYDLKSHKVRNQLTAAALFPLYVNAAAKDRASKMATATKTHLLQPGGLNTTSVKSGQQWDAPNGWAPLQWVATEGLQNYGQKEVAMDISWHFLTNVQHTYDREKKLVEKYDVSATGTGGGGGEYPLQDGFGWTNGVTLKMLDLICPKEQPCDNVPATRPLSESTTQPVKQKEAEPTP.

A signal peptide spans 1 to 30 (MKSPAPSRPQKMALIPACIFLCFAALSVQA). Substrate-binding positions include Arg152, 159-160 (WD), Asn196, 205-207 (RSQ), 277-279 (RPE), and Gly310. Residues Asp312 and Glu496 each act as proton donor/acceptor in the active site. Glu511 contributes to the substrate binding site. The disordered stretch occupies residues 539 to 565 (CDNVPATRPLSESTTQPVKQKEAEPTP).

Belongs to the glycosyl hydrolase 37 family. Monomer.

The protein resides in the periplasm. The catalysed reaction is alpha,alpha-trehalose + H2O = alpha-D-glucose + beta-D-glucose. Provides the cells with the ability to utilize trehalose at high osmolarity by splitting it into glucose molecules that can subsequently be taken up by the phosphotransferase-mediated uptake system. The sequence is that of Periplasmic trehalase from Escherichia coli O6:H1 (strain CFT073 / ATCC 700928 / UPEC).